A 415-amino-acid polypeptide reads, in one-letter code: Serine hydroxymethyltransferase (415 aa).

Residues Leu-121 and 125–127 each bind (6S)-5,6,7,8-tetrahydrofolate; that span reads GHL. An N6-(pyridoxal phosphate)lysine modification is found at Lys-229.

The protein belongs to the SHMT family. As to quaternary structure, homodimer. Requires pyridoxal 5'-phosphate as cofactor.

Its subcellular location is the cytoplasm. The catalysed reaction is (6R)-5,10-methylene-5,6,7,8-tetrahydrofolate + glycine + H2O = (6S)-5,6,7,8-tetrahydrofolate + L-serine. The protein operates within one-carbon metabolism; tetrahydrofolate interconversion. It participates in amino-acid biosynthesis; glycine biosynthesis; glycine from L-serine: step 1/1. Its function is as follows. Catalyzes the reversible interconversion of serine and glycine with tetrahydrofolate (THF) serving as the one-carbon carrier. This reaction serves as the major source of one-carbon groups required for the biosynthesis of purines, thymidylate, methionine, and other important biomolecules. Also exhibits THF-independent aldolase activity toward beta-hydroxyamino acids, producing glycine and aldehydes, via a retro-aldol mechanism. The protein is Serine hydroxymethyltransferase of Bordetella petrii (strain ATCC BAA-461 / DSM 12804 / CCUG 43448).